We begin with the raw amino-acid sequence, 391 residues long: Probable sugar efflux transporter (391 aa).

The next 12 membrane-spanning stretches (helical) occupy residues 16-36 (VFVF…PIAL), 51-71 (VGLM…PLML), 82-102 (LLFL…AWDF), 103-123 (WVLL…WSIT), 138-158 (QALG…LPLG), 170-190 (TFGM…RLLP), 210-230 (PLLV…FTTY), 247-267 (VATL…FLFG), 277-297 (FIAC…SFKH), 300-320 (WVIF…GISL), 338-358 (IFSG…SIVI), and 361-381 (LGLG…LFWF).

Belongs to the major facilitator superfamily. SotB (TC 2.A.1.2) family.

The protein resides in the cell inner membrane. In terms of biological role, involved in the efflux of sugars. The physiological role may be the reduction of the intracellular concentration of toxic sugars or sugar metabolites. The chain is Probable sugar efflux transporter from Helicobacter acinonychis (strain Sheeba).